The following is an 891-amino-acid chain: Metabotropic glutamate receptor-like protein N (891 aa).

At 1–399 (MKLYTHKINR…FKPISKTIEY (399 aa)) the chain is on the extracellular side. N52, N85, N88, N125, N132, N224, N298, N312, N320, N325, N353, N363, and N375 each carry an N-linked (GlcNAc...) asparagine glycan. Residues 52-91 (NNSNSNSNNNNNNNNNNNNNNNNNNNNNNNNNNNNSNNSN) are disordered. The helical transmembrane segment at 400 to 420 (GITIVSSILIGALIIIQICII) threads the bilayer. Over 421-433 (KYKNKPSFKSASP) the chain is Cytoplasmic. A helical transmembrane segment spans residues 434–454 (TFLIFIVIGGIFVYIGVIIWV). Topologically, residues 455–461 (SGVNVFT) are extracellular. Residues 462–482 (CNAKFWLISLGLTTMIGGIVV) form a helical membrane-spanning segment. Residues 483-505 (KNFRIWLIFDNPKLYHIKITNLQ) are Cytoplasmic-facing. Residues 506-526 (LLPWVLGMFLLNVFLLSLITG) traverse the membrane as a helical segment. At 527–555 (LGKLTPFKVFPNDEKFSSYEIQCEMMDGG) the chain is on the extracellular side. A helical membrane pass occupies residues 556–576 (LIALYFLLGYFAIIVMIGIFV). Residues 577-592 (SWKIRIVDIEEFNESK) are Cytoplasmic-facing. The helical transmembrane segment at 593–613 (SVAYSLYSIVFCLLIIAPLTI) threads the bilayer. At 614–625 (SKTGHNTEILCS) the chain is on the extracellular side. A helical transmembrane segment spans residues 626-646 (GFIFIVAAIITIMFIPKFWAL). Over 647 to 891 (KIYGAEGSNE…SDSNSDSIIQ (245 aa)) the chain is Cytoplasmic. Disordered regions lie at residues 660 to 689 (QSSS…KKSS), 742 to 827 (NEMT…ILTP), and 869 to 891 (DEVI…SIIQ). The span at 742–767 (NEMTYNDDPTYTEPSEQPTYTESSEQ) shows a compositional bias: polar residues. Positions 772 to 782 (PRTLTATPRTN) are enriched in low complexity. Residues 783–820 (DLTTPRTNDLTTPRTNDLITPRTNDLSTPRTNDLNTPR) are compositionally biased toward polar residues. Residues 872 to 881 (IENSDSESES) are compositionally biased toward acidic residues. Low complexity predominate over residues 882 to 891 (SDSNSDSIIQ).

Belongs to the G-protein coupled receptor 3 family. GABA-B receptor subfamily.

It is found in the membrane. The protein is Metabotropic glutamate receptor-like protein N (grlN) of Dictyostelium discoideum (Social amoeba).